A 312-amino-acid chain; its full sequence is Large ribosomal subunit protein uL10 (312 aa).

Residues 287–312 (AAAAPAAKKEEPKEESDDDMGFGLFD) are disordered.

This sequence belongs to the universal ribosomal protein uL10 family. As to quaternary structure, P0 forms a pentameric complex by interaction with dimers of P1 and P2. In terms of processing, phosphorylated.

In terms of biological role, ribosomal protein P0 is the functional equivalent of E.coli protein L10. This Caenorhabditis elegans protein is Large ribosomal subunit protein uL10.